Consider the following 572-residue polypeptide: Proline--tRNA ligase (572 aa).

This sequence belongs to the class-II aminoacyl-tRNA synthetase family. ProS type 1 subfamily. In terms of assembly, homodimer.

It is found in the cytoplasm. The catalysed reaction is tRNA(Pro) + L-proline + ATP = L-prolyl-tRNA(Pro) + AMP + diphosphate. In terms of biological role, catalyzes the attachment of proline to tRNA(Pro) in a two-step reaction: proline is first activated by ATP to form Pro-AMP and then transferred to the acceptor end of tRNA(Pro). As ProRS can inadvertently accommodate and process non-cognate amino acids such as alanine and cysteine, to avoid such errors it has two additional distinct editing activities against alanine. One activity is designated as 'pretransfer' editing and involves the tRNA(Pro)-independent hydrolysis of activated Ala-AMP. The other activity is designated 'posttransfer' editing and involves deacylation of mischarged Ala-tRNA(Pro). The misacylated Cys-tRNA(Pro) is not edited by ProRS. The protein is Proline--tRNA ligase of Pectobacterium atrosepticum (strain SCRI 1043 / ATCC BAA-672) (Erwinia carotovora subsp. atroseptica).